The chain runs to 337 residues: Dolichyl-phosphate beta-glucosyltransferase ALG5C (337 aa).

Residues 1 to 6 (MNDLPP) lie on the Lumenal side of the membrane. Residues 7–27 (IANLISNILFVLLIITFLYAL) traverse the membrane as a helical segment. Residues 28 to 337 (CSRFVSDKTL…ADTPISDFEV (310 aa)) are Cytoplasmic-facing.

It belongs to the glycosyltransferase 2 family.

The protein resides in the endoplasmic reticulum membrane. It carries out the reaction a di-trans,poly-cis-dolichyl phosphate + UDP-alpha-D-glucose = a di-trans,poly-cis-dolichyl beta-D-glucosyl phosphate + UDP. Its pathway is protein modification; protein glycosylation. Its function is as follows. Dolichyl-phosphate beta-glucosyltransferase involved in the glycosylation of glycoproteins through the synthesis of dolichyl beta-D-glucosyl phosphate which serves as a sugar donor for transfer of three glucose residues to the Man-9-GlcNAc-2-PP-dolichol precursor to N-glycans. In Trichomonas vaginalis (strain ATCC PRA-98 / G3), this protein is Dolichyl-phosphate beta-glucosyltransferase ALG5C.